Reading from the N-terminus, the 264-residue chain is MSSTESPSRAADKSPRQQVDRLLEGLRWRRLEEPLGFIKVLQWLFAIFAFGSCGSYSGETGAMVRCNNEAKDVSSIIVLFGYPFRLHRIEYEMPLCDDDSSSKTMHLMGDFSAPAEFFVTLGIFSFFYTMAALVVYLRFHKLYTENKRFPLVDFCVTVSFTFFWLVAAAAWGKGLTDVKGATRPSSLTAAMSVCHGEEAVCSAGATPSMGLANISVLFGFINFFLWAGNCWFVFKETPWHGQGQDQGQGPSQESAAEQGAVEKQ.

Residues 1 to 33 (MSSTESPSRAADKSPRQQVDRLLEGLRWRRLEE) are Cytoplasmic-facing. Residues 30 to 238 (RLEEPLGFIK…NCWFVFKETP (209 aa)) enclose the MARVEL domain. Residues 34-54 (PLGFIKVLQWLFAIFAFGSCG) traverse the membrane as a helical segment. Over 55–116 (SYSGETGAMV…LMGDFSAPAE (62 aa)) the chain is Vesicular. The chain crosses the membrane as a helical span at residues 117 to 137 (FFVTLGIFSFFYTMAALVVYL). The Cytoplasmic portion of the chain corresponds to 138–150 (RFHKLYTENKRFP). A helical transmembrane segment spans residues 151–171 (LVDFCVTVSFTFFWLVAAAAW). The Vesicular segment spans residues 172–213 (GKGLTDVKGATRPSSLTAAMSVCHGEEAVCSAGATPSMGLAN). N213 carries N-linked (GlcNAc...) asparagine glycosylation. A helical membrane pass occupies residues 214–234 (ISVLFGFINFFLWAGNCWFVF). The Cytoplasmic segment spans residues 235–264 (KETPWHGQGQDQGQGPSQESAAEQGAVEKQ). Residues 242–264 (QGQDQGQGPSQESAAEQGAVEKQ) form a disordered region.

It belongs to the synaptophysin/synaptobrevin family. As to expression, skeletal muscle.

The protein resides in the membrane. Involved in communication between the T-tubular and junctional sarcoplasmic reticulum (SR) membranes. This chain is Synaptophysin-like protein 2 (SYPL2), found in Oryctolagus cuniculus (Rabbit).